The chain runs to 336 residues: uncharacterized protein (336 aa).

Residues 196-222 (YKEGDDSNWDDFGSESEDDSKEAHSEE) form a disordered region. The span at 201 to 215 (DSNWDDFGSESEDDS) shows a compositional bias: acidic residues. S211 bears the Phosphoserine mark.

This is an uncharacterized protein from Schizosaccharomyces pombe (strain 972 / ATCC 24843) (Fission yeast).